A 387-amino-acid polypeptide reads, in one-letter code: Enoyl-[acyl-carrier-protein] reductase 2, mitochondrial (387 aa).

Residues 1 to 23 constitute a mitochondrion transit peptide; sequence MYRNQLARASLRSTSSINQIRNM. Tyrosine 79 acts as the Proton donor in catalysis. Residues asparagine 172, 199 to 202, 222 to 224, 297 to 300, 322 to 324, and lysine 382 each bind NADP(+); these read NSAV, RDR, YGGM, and FWV.

Belongs to the zinc-containing alcohol dehydrogenase family. Quinone oxidoreductase subfamily. Homodimer.

The protein localises to the mitochondrion matrix. The catalysed reaction is a 2,3-saturated acyl-[ACP] + NADP(+) = a (2E)-enoyl-[ACP] + NADPH + H(+). Catalyzes the NADPH-dependent reduction of trans-2-enoyl thioesters in mitochondrial fatty acid synthesis (fatty acid synthesis type II). Fatty acid chain elongation in mitochondria uses acyl carrier protein (ACP) as an acyl group carrier, but the enzyme accepts both ACP and CoA thioesters as substrates in vitro. Required for respiration and the maintenance of the mitochondrial compartment. The chain is Enoyl-[acyl-carrier-protein] reductase 2, mitochondrial (ETR2) from Debaryomyces hansenii (strain ATCC 36239 / CBS 767 / BCRC 21394 / JCM 1990 / NBRC 0083 / IGC 2968) (Yeast).